The primary structure comprises 208 residues: 7-carboxy-7-deazaguanine synthase (208 aa).

Substrate contacts are provided by residues 23–25 (LQG) and R38. Residues 29-208 (WAGGNAFFIR…LQTHKYLGVR (180 aa)) form the Radical SAM core domain. Residues C42, C46, and C49 each coordinate [4Fe-4S] cluster. T83 is a binding site for substrate. S-adenosyl-L-methionine is bound by residues G85 and 126–128 (SPK).

The protein belongs to the radical SAM superfamily. 7-carboxy-7-deazaguanine synthase family. As to quaternary structure, homodimer. It depends on [4Fe-4S] cluster as a cofactor. Requires S-adenosyl-L-methionine as cofactor. Mg(2+) is required as a cofactor.

It catalyses the reaction 6-carboxy-5,6,7,8-tetrahydropterin + H(+) = 7-carboxy-7-deazaguanine + NH4(+). Its pathway is purine metabolism; 7-cyano-7-deazaguanine biosynthesis. Its function is as follows. Catalyzes the complex heterocyclic radical-mediated conversion of 6-carboxy-5,6,7,8-tetrahydropterin (CPH4) to 7-carboxy-7-deazaguanine (CDG), a step common to the biosynthetic pathways of all 7-deazapurine-containing compounds. In Synechocystis sp. (strain ATCC 27184 / PCC 6803 / Kazusa), this protein is 7-carboxy-7-deazaguanine synthase.